Reading from the N-terminus, the 317-residue chain is Ribosomal RNA small subunit methyltransferase H (317 aa).

S-adenosyl-L-methionine contacts are provided by residues Gly34–His36, Asp53, Phe80, Asp98, and Gln105.

It belongs to the methyltransferase superfamily. RsmH family.

It is found in the cytoplasm. It carries out the reaction cytidine(1402) in 16S rRNA + S-adenosyl-L-methionine = N(4)-methylcytidine(1402) in 16S rRNA + S-adenosyl-L-homocysteine + H(+). In terms of biological role, specifically methylates the N4 position of cytidine in position 1402 (C1402) of 16S rRNA. The chain is Ribosomal RNA small subunit methyltransferase H from Tropheryma whipplei (strain TW08/27) (Whipple's bacillus).